A 344-amino-acid chain; its full sequence is Oxygen sensor histidine kinase NreB (344 aa).

Cysteine 58, cysteine 61, cysteine 73, and cysteine 76 together coordinate [4Fe-4S] cluster. Positions 147 to 344 (ENERKRISRE…GTIITLDIPI (198 aa)) constitute a Histidine kinase domain. At histidine 158 the chain carries Phosphohistidine; by autocatalysis.

[4Fe-4S] cluster serves as cofactor. Autophosphorylated.

It localises to the cytoplasm. The enzyme catalyses ATP + protein L-histidine = ADP + protein N-phospho-L-histidine.. Its function is as follows. Member of the two-component regulatory system NreB/NreC involved in the control of dissimilatory nitrate/nitrite reduction in response to oxygen. NreB functions as a direct oxygen sensor histidine kinase which is autophosphorylated, in the absence of oxygen, probably at the conserved histidine residue, and transfers its phosphate group probably to a conserved aspartate residue of NreC. NreB/NreC activates the expression of the nitrate (narGHJI) and nitrite (nir) reductase operons, as well as the putative nitrate transporter gene narT. The polypeptide is Oxygen sensor histidine kinase NreB (nreB) (Staphylococcus epidermidis (strain ATCC 12228 / FDA PCI 1200)).